A 407-amino-acid polypeptide reads, in one-letter code: Proteasomal ubiquitin receptor ADRM1 (407 aa).

T2 carries the post-translational modification N-acetylthreonine. A Phosphoserine modification is found at S15. The Pru domain maps to 18–131 (ASNKYLVEFR…RKVNEYLNNP (114 aa)). A Glycyl lysine isopeptide (Lys-Gly) (interchain with G-Cter in ubiquitin) cross-link involves residue K34. Y127 carries the post-translational modification Phosphotyrosine. A phosphoserine mark is found at S140 and S211. Disordered stretches follow at residues 194–259 (LLGS…ASPT) and 379–407 (KAMQ…MSLD). The residue at position 217 (T217) is a Phosphothreonine. Residues 253 to 407 (STAASPTQPI…KDEEEDMSLD (155 aa)) form an interaction with UCHL5 region. Residues 277-391 (PAGPAGGQQV…QNNAKPEQKE (115 aa)) form the DEUBAD domain. A compositionally biased stretch (basic and acidic residues) spans 387–398 (PEQKEGDTKDKK). S405 is modified (phosphoserine).

Belongs to the ADRM1 family. Component of the 19S proteasome regulatory particle complex. The 26S proteasome consists of a 20S core particle (CP) and two 19S regulatory subunits (RP). Interacts with the proteasomal scaffolding protein PSMD1. Interacts with deubiquitinase UCHL5; this interaction activates the auto-inhibited UCHL5 by deoligomerizing it. Interacts with UBQLN2 and ubiquitin. In terms of processing, ubiquitinated by UBE3C in response to proteotoxic stress.

It is found in the cytoplasm. It localises to the nucleus. In terms of biological role, component of the 26S proteasome, a multiprotein complex involved in the ATP-dependent degradation of ubiquitinated proteins. This complex plays a key role in the maintenance of protein homeostasis by removing misfolded or damaged proteins, which could impair cellular functions, and by removing proteins whose functions are no longer required. Therefore, the proteasome participates in numerous cellular processes, including cell cycle progression, apoptosis, or DNA damage repair. Within the complex, functions as a proteasomal ubiquitin receptor. Engages and activates 19S-associated deubiquitinases UCHL5 and PSMD14 during protein degradation. UCHL5 reversibly associate with the 19S regulatory particle whereas PSMD14 is an intrinsic subunit of the proteasome lid subcomplex. The polypeptide is Proteasomal ubiquitin receptor ADRM1 (ADRM1) (Homo sapiens (Human)).